A 264-amino-acid polypeptide reads, in one-letter code: 3-methyl-2-oxobutanoate hydroxymethyltransferase (264 aa).

Residues D45 and D84 each contribute to the Mg(2+) site. 3-methyl-2-oxobutanoate contacts are provided by residues 45–46, D84, and K112; that span reads DS. Position 114 (E114) interacts with Mg(2+). E181 serves as the catalytic Proton acceptor.

The protein belongs to the PanB family. In terms of assembly, homodecamer; pentamer of dimers. Requires Mg(2+) as cofactor.

The protein resides in the cytoplasm. It catalyses the reaction 3-methyl-2-oxobutanoate + (6R)-5,10-methylene-5,6,7,8-tetrahydrofolate + H2O = 2-dehydropantoate + (6S)-5,6,7,8-tetrahydrofolate. Its pathway is cofactor biosynthesis; (R)-pantothenate biosynthesis; (R)-pantoate from 3-methyl-2-oxobutanoate: step 1/2. In terms of biological role, catalyzes the reversible reaction in which hydroxymethyl group from 5,10-methylenetetrahydrofolate is transferred onto alpha-ketoisovalerate to form ketopantoate. This chain is 3-methyl-2-oxobutanoate hydroxymethyltransferase, found in Escherichia coli (strain 55989 / EAEC).